A 272-amino-acid polypeptide reads, in one-letter code: 3-methyl-2-oxobutanoate hydroxymethyltransferase (272 aa).

Residues Asp-43 and Asp-82 each contribute to the Mg(2+) site. 3-methyl-2-oxobutanoate is bound by residues 43–44, Asp-82, and Lys-112; that span reads DS. A Mg(2+)-binding site is contributed by Glu-114. Glu-179 functions as the Proton acceptor in the catalytic mechanism.

This sequence belongs to the PanB family. As to quaternary structure, homodecamer; pentamer of dimers. Requires Mg(2+) as cofactor.

It localises to the cytoplasm. It carries out the reaction 3-methyl-2-oxobutanoate + (6R)-5,10-methylene-5,6,7,8-tetrahydrofolate + H2O = 2-dehydropantoate + (6S)-5,6,7,8-tetrahydrofolate. It functions in the pathway cofactor biosynthesis; (R)-pantothenate biosynthesis; (R)-pantoate from 3-methyl-2-oxobutanoate: step 1/2. Functionally, catalyzes the reversible reaction in which hydroxymethyl group from 5,10-methylenetetrahydrofolate is transferred onto alpha-ketoisovalerate to form ketopantoate. The sequence is that of 3-methyl-2-oxobutanoate hydroxymethyltransferase from Staphylococcus aureus (strain Newman).